We begin with the raw amino-acid sequence, 146 residues long: Large ribosomal subunit protein uL15x (146 aa).

Composition is skewed to basic residues over residues 1-14 and 21-30; these read MTTR…KRGH and RIGKHRKHPG. A disordered region spans residues 1–35; that stretch reads MTTRFKKNRKKRGHVSAGHGRIGKHRKHPGGRGNA.

It belongs to the universal ribosomal protein uL15 family.

The protein is Large ribosomal subunit protein uL15x (RPL27AC) of Arabidopsis thaliana (Mouse-ear cress).